The sequence spans 505 residues: Band 7 protein CG42540 (505 aa).

The disordered stretch occupies residues 1–164; the sequence is MPDSMMDMEH…IHRAEARRAD (164 aa). The segment covering 47-60 has biased composition (basic and acidic residues); the sequence is SEERDRDRDRERDH. Composition is skewed to low complexity over residues 82 to 104 and 113 to 139; these read QLHQ…QQPQ and QQQQ…QQLP. A helical transmembrane segment spans residues 178 to 198; the sequence is LIFLSVALVIMTLPFSLFVCF. The tract at residues 443–505 is disordered; it reads GNTPPPLQLA…QQGQQISSAM (63 aa). The segment covering 451 to 505 has biased composition (low complexity); the sequence is LAPQQQMGQQQQPQYQQPQQQQQQYQPQQQQQQQQQQPQQQDQLYQQGQQISSAM.

It belongs to the band 7/mec-2 family.

The protein resides in the membrane. The polypeptide is Band 7 protein CG42540 (Drosophila melanogaster (Fruit fly)).